A 78-amino-acid chain; its full sequence is Putative membrane protein insertion efficiency factor (78 aa).

The protein belongs to the UPF0161 family.

It is found in the cell inner membrane. Could be involved in insertion of integral membrane proteins into the membrane. The chain is Putative membrane protein insertion efficiency factor from Prochlorococcus marinus subsp. pastoris (strain CCMP1986 / NIES-2087 / MED4).